Consider the following 137-residue polypeptide: Small ribosomal subunit protein uS11 (137 aa).

Disordered regions lie at residues 1 to 32 and 118 to 137; these read MPPK…AHIK and ISDV…RRRV. Basic residues predominate over residues 12–21; sequence KTQKSRRRDK.

The protein belongs to the universal ribosomal protein uS11 family. Part of the 30S ribosomal subunit. Interacts with proteins S7 and S18. Binds to IF-3.

Located on the platform of the 30S subunit, it bridges several disparate RNA helices of the 16S rRNA. Forms part of the Shine-Dalgarno cleft in the 70S ribosome. The chain is Small ribosomal subunit protein uS11 from Nocardia farcinica (strain IFM 10152).